The primary structure comprises 75 residues: Small ribosomal subunit protein bS16 (75 aa).

This sequence belongs to the bacterial ribosomal protein bS16 family.

The protein is Small ribosomal subunit protein bS16 of Nitratiruptor sp. (strain SB155-2).